The following is a 527-amino-acid chain: Bifunctional purine biosynthesis protein PurH (527 aa).

In terms of domain architecture, MGS-like spans 1–149 (MASDFLPVRR…KNFARVAVAT (149 aa)).

The protein belongs to the PurH family.

It catalyses the reaction (6R)-10-formyltetrahydrofolate + 5-amino-1-(5-phospho-beta-D-ribosyl)imidazole-4-carboxamide = 5-formamido-1-(5-phospho-D-ribosyl)imidazole-4-carboxamide + (6S)-5,6,7,8-tetrahydrofolate. The enzyme catalyses IMP + H2O = 5-formamido-1-(5-phospho-D-ribosyl)imidazole-4-carboxamide. It functions in the pathway purine metabolism; IMP biosynthesis via de novo pathway; 5-formamido-1-(5-phospho-D-ribosyl)imidazole-4-carboxamide from 5-amino-1-(5-phospho-D-ribosyl)imidazole-4-carboxamide (10-formyl THF route): step 1/1. Its pathway is purine metabolism; IMP biosynthesis via de novo pathway; IMP from 5-formamido-1-(5-phospho-D-ribosyl)imidazole-4-carboxamide: step 1/1. The chain is Bifunctional purine biosynthesis protein PurH from Xanthomonas oryzae pv. oryzae (strain PXO99A).